The sequence spans 373 residues: tRNA (guanine(26)-N(2))-dimethyltransferase (373 aa).

The Trm1 methyltransferase domain maps to 2–365 (KIISEGETKL…AELSDLVVLI (364 aa)). The S-adenosyl-L-methionine site is built by Arg-35, Arg-66, Asp-86, Asp-113, and Ala-114.

The protein belongs to the class I-like SAM-binding methyltransferase superfamily. Trm1 family.

It catalyses the reaction guanosine(26) in tRNA + 2 S-adenosyl-L-methionine = N(2)-dimethylguanosine(26) in tRNA + 2 S-adenosyl-L-homocysteine + 2 H(+). Its function is as follows. Dimethylates a single guanine residue at position 26 of a number of tRNAs using S-adenosyl-L-methionine as donor of the methyl groups. This chain is tRNA (guanine(26)-N(2))-dimethyltransferase, found in Methanococcus maripaludis (strain C5 / ATCC BAA-1333).